The primary structure comprises 77 residues: Rhodotorucin-A peptides type 2 (77 aa).

The propeptide occupies 1-3 (MVA). The S-farnesyl cysteine moiety is linked to residue C14. A propeptide spanning residues 15–18 (TVAK) is cleaved from the precursor. A lipid anchor (S-farnesyl cysteine) is attached at C29. The propeptide occupies 30-33 (TVSK). A lipid anchor (S-farnesyl cysteine) is attached at C44. A propeptide spanning residues 45–48 (TVSK) is cleaved from the precursor. C59 carries S-farnesyl cysteine lipidation. A propeptide spanning residues 60 to 63 (TVSK) is cleaved from the precursor. C74 carries the S-farnesyl cysteine lipid modification. A propeptide spanning residues 75 to 77 (TVA) is cleaved from the precursor.

It localises to the cell membrane. Rhodotorucin-A is a mating pheromone in cells of mating type A of Rhodosporidium toruloides. The sequence is that of Rhodotorucin-A peptides type 2 (RHA2) from Rhodotorula toruloides (Yeast).